Reading from the N-terminus, the 1046-residue chain is Probable inorganic carbon transporter subunit DabA1 (1046 aa).

Cys-462, Asp-464, His-721, and Cys-736 together coordinate Zn(2+).

The protein belongs to the inorganic carbon transporter (TC 9.A.2) DabA family. Forms a complex with DabB1. Requires Zn(2+) as cofactor.

It is found in the cell inner membrane. Its function is as follows. Part of an energy-coupled inorganic carbon pump. This chain is Probable inorganic carbon transporter subunit DabA1, found in Halothiobacillus neapolitanus (strain ATCC 23641 / c2) (Thiobacillus neapolitanus).